The primary structure comprises 344 residues: Serine proteinase inhibitor 2 (344 aa).

It belongs to the serpin family. Poxviruses subfamily.

Its subcellular location is the host cytoplasm. Viral serpin that inhibits both cysteine and serine proteinases involved in the regulation of host inflammatory and apoptosis processes. Major anti-apoptotic protein which inhibits both intrinsic and extrinsic pathways and strongly cleaves host CASP1 and CASP8 but is a rather poor inhibitor of host CASP3. Prevents the proteolytic activity of host interleukin-1-beta converting enzyme (ICE) and ICE-like enzymes. Can also block apoptosis through host tumor necrosis factor (TNF) receptor. The inhibition of host ICE is an example of a 'cross-class' interaction, in which a serpin inhibits a non-serine proteinase. Also inhibits granzyme B. In Cynomys gunnisoni (Gunnison's prairie dog), this protein is Serine proteinase inhibitor 2 (OPG199).